Consider the following 768-residue polypeptide: P-selectin (768 aa).

The N-terminal stretch at M1–T41 is a signal peptide. Topologically, residues W42–A709 are extracellular. Residues N45, N54, and N107 are each glycosylated (N-linked (GlcNAc...) asparagine). Positions A58–C158 constitute a C-type lectin domain. 20 disulfide bridges follow: C60/C158, C131/C150, C168/C183, C185/C194, C200/C244, C230/C257, C262/C306, C292/C319, C324/C368, C354/C381, C386/C430, C416/C443, C448/C492, C478/C505, C510/C554, C540/C567, C580/C624, C610/C637, C642/C686, and C672/C699. Ca(2+)-binding residues include E121, N123, and N124. N123 serves as a coordination point for a carbohydrate. Positions 133 and 146 each coordinate a carbohydrate. Positions 146 and 147 each coordinate Ca(2+). The region spanning Y159–E195 is the EGF-like domain. 8 Sushi domains span residues Q198–A259, V260–A321, I322–A383, L384–A445, V446–A507, I508–G569, V578–A639, and V640–A701. An N-linked (GlcNAc...) asparagine glycan is attached at N212. N347 is a glycosylation site (N-linked (GlcNAc...) asparagine). An N-linked (GlcNAc...) asparagine glycan is attached at N456. N603 carries an N-linked (GlcNAc...) asparagine glycan. 3 N-linked (GlcNAc...) asparagine glycosylation sites follow: N654, N661, and N679. The helical transmembrane segment at L710 to L733 threads the bilayer. Residues R734–P768 lie on the Cytoplasmic side of the membrane. Residue C745 is the site of S-palmitoyl cysteine; alternate attachment. C745 is lipidated: S-stearoyl cysteine; alternate. The Endocytosis signal motif lies at Y756–F759. The tract at residues F759–P768 is interaction with SNX17.

The protein belongs to the selectin/LECAM family. Interacts with SNX17. Interacts with SELPLG/PSGL1 and PODXL2 and mediates neutrophil adhesion and leukocyte rolling. This interaction requires the sialyl-Lewis X epitope of SELPLG and PODXL2, and specific tyrosine sulfation on SELPLG. Interacts (via C-type lectin domain) with alpha-IIb/beta3 integrin ITGA2B:ITGB3 and alpha-V/beta-3 integrin ITGAV:ITGB3. Interacts with alpha5/beta1 integrin ITGA5:ITGB1 and alpha4/beta1 integrin ITGA4:ITGB. In terms of tissue distribution, not detected in the absence of exposure to lipopolysaccharide (LPS). Detected only after exposure to lipopolysaccharide (LPS) in the tissues examined: spleen, lung, brain, liver, heart, kidney, thymus and small intestine.

Its subcellular location is the cell membrane. Ca(2+)-dependent receptor for myeloid cells that binds to carbohydrates on neutrophils and monocytes. Mediates the interaction of activated endothelial cells or platelets with leukocytes. The ligand recognized is sialyl-Lewis X. Mediates rapid rolling of leukocyte rolling over vascular surfaces during the initial steps in inflammation through interaction with SELPLG. Mediates cell-cell interactions and cell adhesion via the interaction with integrin alpha-IIb/beta3 (ITGA2B:ITGB3) and integrin alpha-V/beta-3 (ITGAV:ITGB3). This Rattus norvegicus (Rat) protein is P-selectin (Selp).